Reading from the N-terminus, the 317-residue chain is 17-beta-hydroxysteroid dehydrogenase type 6 (317 aa).

Residues 1 to 17 form the signal peptide; that stretch reads MWFYLVTLVGLYYLLRW. 33–57 lines the NAD(+) pocket; sequence FITGCDSGFGNLLARQLDRRGMRVL. N-linked (GlcNAc...) asparagine glycosylation occurs at Asn161. Ser164 contributes to the substrate binding site. Residue Tyr176 is the Proton acceptor of the active site.

Belongs to the short-chain dehydrogenases/reductases (SDR) family. In terms of tissue distribution, detected in prostate, liver and kidney.

The protein localises to the microsome membrane. The protein resides in the endoplasmic reticulum membrane. It carries out the reaction all-trans-retinol--[retinol-binding protein] + NAD(+) = all-trans-retinal--[retinol-binding protein] + NADH + H(+). The enzyme catalyses all-trans-retinol + NAD(+) = all-trans-retinal + NADH + H(+). The catalysed reaction is androsterone + NAD(+) = 5alpha-androstan-3,17-dione + NADH + H(+). It catalyses the reaction testosterone + NAD(+) = androst-4-ene-3,17-dione + NADH + H(+). It carries out the reaction 5alpha-androstane-3alpha,17beta-diol + NAD(+) = 17beta-hydroxy-5alpha-androstan-3-one + NADH + H(+). The enzyme catalyses 17beta-estradiol + NAD(+) = estrone + NADH + H(+). The catalysed reaction is 17beta-estradiol + NADP(+) = estrone + NADPH + H(+). It catalyses the reaction 3alpha-hydroxy-5alpha-pregnan-20-one + NAD(+) = 5alpha-pregnane-3,20-dione + NADH + H(+). It carries out the reaction 5alpha-androstane-3beta,17beta-diol + NAD(+) = 17beta-hydroxy-5alpha-androstan-3-one + NADH + H(+). The enzyme catalyses 3beta-hydroxy-5alpha-androstan-17-one + NAD(+) = 5alpha-androstan-3,17-dione + NADH + H(+). Its activity is regulated as follows. Competitively inhibited by 9-cis-retinoic acid and 13-cis-retinoic acid. Its function is as follows. NAD-dependent oxidoreductase with broad substrate specificity that shows both oxidative and reductive activity (in vitro). Has retinol dehydrogenase activity towards all-trans-retinol (in vitro). Has 17-beta-hydroxysteroid dehydrogenase activity towards various steroids (in vitro). Converts 5-alpha-androstan-3-alpha,17-beta-diol to androsterone and estradiol to estrone (in vitro). Has 3-alpha-hydroxysteroid dehydrogenase activity towards androsterone (in vitro). The polypeptide is 17-beta-hydroxysteroid dehydrogenase type 6 (Hsd17b6) (Rattus norvegicus (Rat)).